Reading from the N-terminus, the 79-residue chain is MISKAIIKKVSIAPRKARLVVDLIRGKEIKVAKAILMFTPKSASSIVLKLLNSAEANLAQNINLKSNDFYISEVYVNEG.

It belongs to the universal ribosomal protein uL22 family. As to quaternary structure, part of the 50S ribosomal subunit.

In terms of biological role, this protein binds specifically to 23S rRNA; its binding is stimulated by other ribosomal proteins, e.g. L4, L17, and L20. It is important during the early stages of 50S assembly. It makes multiple contacts with different domains of the 23S rRNA in the assembled 50S subunit and ribosome. Its function is as follows. The globular domain of the protein is located near the polypeptide exit tunnel on the outside of the subunit, while an extended beta-hairpin is found that lines the wall of the exit tunnel in the center of the 70S ribosome. The chain is Large ribosomal subunit protein uL22 (rplV) from Prunus armeniaca phytoplasma.